Here is a 238-residue protein sequence, read N- to C-terminus: Cysteine-rich venom protein (238 aa).

The signal sequence occupies residues Met1 to Gly19. Residues Val38–Tyr164 form the SCP domain. Intrachain disulfides connect Cys75/Cys153, Cys92/Cys165, Cys148/Cys162, Cys184/Cys191, Cys187/Cys196, Cys200/Cys233, Cys209/Cys227, and Cys218/Cys231. The 34-residue stretch at Cys200–Cys233 folds into the ShKT domain.

Belongs to the CRISP family. As to expression, expressed by the venom gland.

It is found in the secreted. Functionally, blocks contraction of smooth muscle elicited by high potassium-induced depolarization, but does not block caffeine-stimulated contraction. May target voltage-gated calcium channels on smooth muscle. The polypeptide is Cysteine-rich venom protein (Austrelaps superbus (Lowland copperhead snake)).